The primary structure comprises 412 residues: ATP phosphoribosyltransferase regulatory subunit (412 aa).

Belongs to the class-II aminoacyl-tRNA synthetase family. HisZ subfamily. In terms of assembly, heteromultimer composed of HisG and HisZ subunits.

The protein localises to the cytoplasm. Its pathway is amino-acid biosynthesis; L-histidine biosynthesis; L-histidine from 5-phospho-alpha-D-ribose 1-diphosphate: step 1/9. Its function is as follows. Required for the first step of histidine biosynthesis. May allow the feedback regulation of ATP phosphoribosyltransferase activity by histidine. In Dehalococcoides mccartyi (strain ATCC BAA-2266 / KCTC 15142 / 195) (Dehalococcoides ethenogenes (strain 195)), this protein is ATP phosphoribosyltransferase regulatory subunit.